A 263-amino-acid polypeptide reads, in one-letter code: Type III pantothenate kinase (263 aa).

Residue 6–13 coordinates ATP; the sequence is DVGNTNIK. 108–111 contributes to the substrate binding site; sequence GSDR. Residue D110 is the Proton acceptor of the active site. A K(+)-binding site is contributed by D131. Residue T134 coordinates ATP. Substrate is bound at residue T187.

It belongs to the type III pantothenate kinase family. In terms of assembly, homodimer. NH4(+) serves as cofactor. The cofactor is K(+).

The protein resides in the cytoplasm. The enzyme catalyses (R)-pantothenate + ATP = (R)-4'-phosphopantothenate + ADP + H(+). It functions in the pathway cofactor biosynthesis; coenzyme A biosynthesis; CoA from (R)-pantothenate: step 1/5. In terms of biological role, catalyzes the phosphorylation of pantothenate (Pan), the first step in CoA biosynthesis. This chain is Type III pantothenate kinase, found in Anaplasma phagocytophilum (strain HZ).